The following is a 373-amino-acid chain: 4-hydroxy-3-methylbut-2-en-1-yl diphosphate synthase (flavodoxin) (373 aa).

Residues cysteine 270, cysteine 273, cysteine 305, and glutamate 312 each coordinate [4Fe-4S] cluster.

Belongs to the IspG family. [4Fe-4S] cluster is required as a cofactor.

It carries out the reaction (2E)-4-hydroxy-3-methylbut-2-enyl diphosphate + oxidized [flavodoxin] + H2O + 2 H(+) = 2-C-methyl-D-erythritol 2,4-cyclic diphosphate + reduced [flavodoxin]. It participates in isoprenoid biosynthesis; isopentenyl diphosphate biosynthesis via DXP pathway; isopentenyl diphosphate from 1-deoxy-D-xylulose 5-phosphate: step 5/6. Its function is as follows. Converts 2C-methyl-D-erythritol 2,4-cyclodiphosphate (ME-2,4cPP) into 1-hydroxy-2-methyl-2-(E)-butenyl 4-diphosphate. This chain is 4-hydroxy-3-methylbut-2-en-1-yl diphosphate synthase (flavodoxin), found in Photobacterium profundum (strain SS9).